Here is a 228-residue protein sequence, read N- to C-terminus: Biopolymer transport protein exbB1 (228 aa).

The next 3 membrane-spanning stretches (helical) occupy residues 11–31 (LGLMAWPLFICSALTVMLLAE), 116–136 (LTLIGVISPLLGLLGTVLGLI), and 158–178 (LGVAMYTTAAGLLIAVPAVAG).

Belongs to the ExbB/TolQ family. In terms of assembly, the accessory proteins ExbB and ExbD seem to form a complex with TonB.

It is found in the cell inner membrane. Involved in the TonB-dependent energy-dependent transport of various receptor-bound substrates. Protects ExbD from proteolytic degradation and functionally stabilizes TonB. The polypeptide is Biopolymer transport protein exbB1 (exbB1) (Vibrio cholerae serotype O1 (strain ATCC 39315 / El Tor Inaba N16961)).